A 1038-amino-acid chain; its full sequence is Fibronectin-binding protein A (1038 aa).

The signal sequence occupies residues Met-1–Ala-36. The YSIRK-G/S signaling motif signature appears at Tyr-7–Ser-18. Residues Ala-37–Thr-193 are disordered. The tract at residues Ala-37–Asn-507 is ligand-binding A region. The span at Glu-39–Thr-92 shows a compositional bias: polar residues. A compositionally biased stretch (basic and acidic residues) spans Thr-112–Val-121. A compositionally biased stretch (polar residues) spans Lys-122–Glu-164. Positions Asp-174–Gly-189 are enriched in basic and acidic residues. The tract at residues Gly-189–Asn-507 is fibrinogen/elastin/tropoelastin-binding. The interval Gly-508–Thr-868 is fibronectin-binding. A B-1 repeat occupies Glu-541 to Ile-570. Positions Glu-541 to Ser-600 are 2 X approximate tandem repeats. One copy of the B-2 repeat lies at Glu-571 to Ser-600. Disordered regions lie at residues Leu-736 to Ile-804, Ile-825 to Val-976, and Val-989 to Met-1015. The D-1 repeat unit spans residues Gly-741 to His-778. The segment at Gly-741–Thr-898 is 4 X approximate tandem repeats. The D-2 repeat unit spans residues Gly-779–His-816. The D-3 repeat unit spans residues Gly-817–Ser-855. The segment covering Ile-825–Pro-834 has biased composition (basic and acidic residues). A D-4 repeat occupies Gly-856 to Thr-898. Pro residues predominate over residues Pro-870–Pro-958. 5 WR repeats span residues Pro-899 to Thr-912, Pro-913 to Thr-926, Pro-927 to Thr-940, Pro-941 to Lys-954, and Pro-955 to Lys-968. Residues Pro-899–Lys-968 form a 5 X tandem repeats, Pro-rich (WR) region. An LPXTG sorting signal motif is present at residues Leu-1002 to Gly-1006. A Pentaglycyl murein peptidoglycan amidated threonine modification is found at Thr-1005. A propeptide spans Gly-1006–Ala-1038 (removed by sortase).

The protein localises to the secreted. Its subcellular location is the cell wall. In terms of biological role, promotes bacterial attachment to multiple substrates, such as fibronectin (Fn), fibrinogen (Fg), elastin peptides and tropoelastin. This confers to S.aureus the ability to invade endothelial cells. Promotes adherence to and aggregation of activated platelets. The sequence is that of Fibronectin-binding protein A (fnbA) from Staphylococcus aureus (strain Mu50 / ATCC 700699).